The following is a 176-amino-acid chain: NAD(P)H-quinone oxidoreductase subunit 6, chloroplastic (176 aa).

5 helical membrane passes run 10–30, 33–53, 61–81, 92–112, and 152–172; these read FLLV…VLLA, IYSA…YILA, AQLL…VMFI, LWTV…VSLI, and FFLP…GAIA.

The protein belongs to the complex I subunit 6 family. As to quaternary structure, NDH is composed of at least 16 different subunits, 5 of which are encoded in the nucleus.

Its subcellular location is the plastid. It localises to the chloroplast thylakoid membrane. The enzyme catalyses a plastoquinone + NADH + (n+1) H(+)(in) = a plastoquinol + NAD(+) + n H(+)(out). It catalyses the reaction a plastoquinone + NADPH + (n+1) H(+)(in) = a plastoquinol + NADP(+) + n H(+)(out). In terms of biological role, NDH shuttles electrons from NAD(P)H:plastoquinone, via FMN and iron-sulfur (Fe-S) centers, to quinones in the photosynthetic chain and possibly in a chloroplast respiratory chain. The immediate electron acceptor for the enzyme in this species is believed to be plastoquinone. Couples the redox reaction to proton translocation, and thus conserves the redox energy in a proton gradient. This chain is NAD(P)H-quinone oxidoreductase subunit 6, chloroplastic (ndhG), found in Guizotia abyssinica (Niger).